A 399-amino-acid polypeptide reads, in one-letter code: Phosphoglycerate kinase (399 aa).

Substrate contacts are provided by residues 22-24, arginine 37, 60-63, arginine 119, and arginine 152; these read DLN and HFGR. ATP contacts are provided by residues lysine 202, glutamate 324, and 354–357; that span reads GGDT.

The protein belongs to the phosphoglycerate kinase family. In terms of assembly, monomer.

It localises to the cytoplasm. The enzyme catalyses (2R)-3-phosphoglycerate + ATP = (2R)-3-phospho-glyceroyl phosphate + ADP. It functions in the pathway carbohydrate degradation; glycolysis; pyruvate from D-glyceraldehyde 3-phosphate: step 2/5. This is Phosphoglycerate kinase from Sinorhizobium medicae (strain WSM419) (Ensifer medicae).